We begin with the raw amino-acid sequence, 276 residues long: 4-hydroxy-3-methylbut-2-enyl diphosphate reductase (276 aa).

Residue Cys-12 participates in [4Fe-4S] cluster binding. 2 residues coordinate (2E)-4-hydroxy-3-methylbut-2-enyl diphosphate: His-36 and His-70. Residues His-36 and His-70 each coordinate dimethylallyl diphosphate. Isopentenyl diphosphate is bound by residues His-36 and His-70. A [4Fe-4S] cluster-binding site is contributed by Cys-92. His-120 is a (2E)-4-hydroxy-3-methylbut-2-enyl diphosphate binding site. His-120 contacts dimethylallyl diphosphate. His-120 lines the isopentenyl diphosphate pocket. Residue Glu-122 is the Proton donor of the active site. Residue Thr-158 participates in (2E)-4-hydroxy-3-methylbut-2-enyl diphosphate binding. Residue Cys-186 coordinates [4Fe-4S] cluster. The (2E)-4-hydroxy-3-methylbut-2-enyl diphosphate site is built by Ser-214, Ser-215, Asn-216, and Ser-258. Residues Ser-214, Ser-215, Asn-216, and Ser-258 each contribute to the dimethylallyl diphosphate site. Isopentenyl diphosphate-binding residues include Ser-214, Ser-215, Asn-216, and Ser-258.

The protein belongs to the IspH family. [4Fe-4S] cluster serves as cofactor.

The enzyme catalyses isopentenyl diphosphate + 2 oxidized [2Fe-2S]-[ferredoxin] + H2O = (2E)-4-hydroxy-3-methylbut-2-enyl diphosphate + 2 reduced [2Fe-2S]-[ferredoxin] + 2 H(+). It carries out the reaction dimethylallyl diphosphate + 2 oxidized [2Fe-2S]-[ferredoxin] + H2O = (2E)-4-hydroxy-3-methylbut-2-enyl diphosphate + 2 reduced [2Fe-2S]-[ferredoxin] + 2 H(+). It functions in the pathway isoprenoid biosynthesis; dimethylallyl diphosphate biosynthesis; dimethylallyl diphosphate from (2E)-4-hydroxy-3-methylbutenyl diphosphate: step 1/1. The protein operates within isoprenoid biosynthesis; isopentenyl diphosphate biosynthesis via DXP pathway; isopentenyl diphosphate from 1-deoxy-D-xylulose 5-phosphate: step 6/6. Catalyzes the conversion of 1-hydroxy-2-methyl-2-(E)-butenyl 4-diphosphate (HMBPP) into a mixture of isopentenyl diphosphate (IPP) and dimethylallyl diphosphate (DMAPP). Acts in the terminal step of the DOXP/MEP pathway for isoprenoid precursor biosynthesis. This Wolinella succinogenes (strain ATCC 29543 / DSM 1740 / CCUG 13145 / JCM 31913 / LMG 7466 / NCTC 11488 / FDC 602W) (Vibrio succinogenes) protein is 4-hydroxy-3-methylbut-2-enyl diphosphate reductase.